Consider the following 1485-residue polypeptide: Dicer-like protein 2 (1485 aa).

Positions 1 to 11 are enriched in low complexity; the sequence is MSSQDESASSS. Positions 1-61 are disordered; it reads MSSQDESASS…EPQPSGNGPR (61 aa). The 179-residue stretch at 72–250 folds into the Helicase ATP-binding domain; sequence MFQASMQQNI…MEDLESSLDS (179 aa). 85-92 contacts ATP; the sequence is MDTGSGKT. The short motif at 193-196 is the DEAH box element; that stretch reads DEAH. One can recognise a Helicase C-terminal domain in the interval 415–579; the sequence is KLQVLLRILR…RYENDMRELD (165 aa). Residues 609-712 form the Dicer dsRNA-binding fold domain; it reads AKGHLEHFCR…LPIRESDFVD (104 aa). RNase III domains follow at residues 988 to 1127 and 1168 to 1358; these read AQEL…IEGG and LGPL…VDSG. Residues Glu-1208, Asp-1344, and Glu-1347 each coordinate Mg(2+). The 82-residue stretch at 1388 to 1469 folds into the DRBM domain; it reads HPKEELGRVA…ALEVIRVWEE (82 aa).

This sequence belongs to the helicase family. Dicer subfamily. It depends on Mg(2+) as a cofactor. Requires Mn(2+) as cofactor.

Dicer-like endonuclease involved in cleaving double-stranded RNA in the RNA interference (RNAi) pathway. Produces 21 to 25 bp dsRNAs (siRNAs) which target the selective destruction of homologous RNAs leading to sequence-specific suppression of gene expression, called post-transcriptional gene silencing (PTGS). Part of a broad host defense response against viral infection and transposons. This Pyricularia oryzae (strain 70-15 / ATCC MYA-4617 / FGSC 8958) (Rice blast fungus) protein is Dicer-like protein 2 (DCL2).